A 273-amino-acid polypeptide reads, in one-letter code: Polyamine aminopropyltransferase (273 aa).

The 234-residue stretch at 5 to 238 folds into the PABS domain; sequence ENWFSERYSD…GFWSFTVASP (234 aa). Position 34 (glutamine 34) interacts with S-methyl-5'-thioadenosine. Positions 65 and 90 each coordinate spermidine. Residues glutamate 109 and 140 to 141 contribute to the S-methyl-5'-thioadenosine site; that span reads DG. The active-site Proton acceptor is aspartate 158. Spermidine is bound at residue 158–161; it reads DSTD. Proline 165 is an S-methyl-5'-thioadenosine binding site.

It belongs to the spermidine/spermine synthase family. Homodimer or homotetramer.

It localises to the cytoplasm. The catalysed reaction is S-adenosyl 3-(methylsulfanyl)propylamine + putrescine = S-methyl-5'-thioadenosine + spermidine + H(+). The protein operates within amine and polyamine biosynthesis; spermidine biosynthesis; spermidine from putrescine: step 1/1. Catalyzes the irreversible transfer of a propylamine group from the amino donor S-adenosylmethioninamine (decarboxy-AdoMet) to putrescine (1,4-diaminobutane) to yield spermidine. The polypeptide is Polyamine aminopropyltransferase (Thermoplasma acidophilum (strain ATCC 25905 / DSM 1728 / JCM 9062 / NBRC 15155 / AMRC-C165)).